Reading from the N-terminus, the 397-residue chain is Oxygen-dependent coproporphyrinogen-III oxidase, chloroplastic (397 aa).

A disordered region spans residues 76–95 (ESDMGSNVTSNSSSVRGRFE). A compositionally biased stretch (polar residues) spans 79 to 90 (MGSNVTSNSSSV). Residues 135-144 (VLQDGAVFEK) are important for dimerization. Ser-185 lines the substrate pocket. The active-site Proton donor is the His-199. Residues 201–203 (NYR) and 355–360 (GGRIES) contribute to the substrate site. Positions 337–372 (YVEFNLVYDRGTTFGLKTGGRIESILVSLPLTARWE) are important for dimerization.

The protein belongs to the aerobic coproporphyrinogen-III oxidase family. In terms of assembly, homodimer.

Its subcellular location is the plastid. It is found in the chloroplast. It carries out the reaction coproporphyrinogen III + O2 + 2 H(+) = protoporphyrinogen IX + 2 CO2 + 2 H2O. The protein operates within porphyrin-containing compound metabolism; protoporphyrin-IX biosynthesis; protoporphyrinogen-IX from coproporphyrinogen-III (O2 route): step 1/1. In terms of biological role, involved in the heme and chlorophyll biosynthesis. Catalyzes the aerobic oxidative decarboxylation of propionate groups of rings A and B of coproporphyrinogen-III to yield the vinyl groups in protoporphyrinogen-IX. The protein is Oxygen-dependent coproporphyrinogen-III oxidase, chloroplastic (CPX) of Nicotiana tabacum (Common tobacco).